Here is a 466-residue protein sequence, read N- to C-terminus: Ribulose bisphosphate carboxylase large chain (466 aa).

The residue at position 5 (Lys-5) is an N6,N6,N6-trimethyllysine. Substrate-binding residues include Asn-114 and Thr-164. Catalysis depends on Lys-166, which acts as the Proton acceptor. Lys-168 contributes to the substrate binding site. 3 residues coordinate Mg(2+): Lys-192, Asp-194, and Glu-195. Lys-192 is modified (N6-carboxylysine). Residue His-285 is the Proton acceptor of the active site. Positions 286, 318, and 370 each coordinate substrate.

The protein belongs to the RuBisCO large chain family. Type I subfamily. In terms of assembly, heterohexadecamer of 8 large chains and 8 small chains; disulfide-linked. The disulfide link is formed within the large subunit homodimers. The cofactor is Mg(2+). In terms of processing, the disulfide bond which can form in the large chain dimeric partners within the hexadecamer appears to be associated with oxidative stress and protein turnover.

It is found in the plastid. The protein localises to the chloroplast. It carries out the reaction 2 (2R)-3-phosphoglycerate + 2 H(+) = D-ribulose 1,5-bisphosphate + CO2 + H2O. The enzyme catalyses D-ribulose 1,5-bisphosphate + O2 = 2-phosphoglycolate + (2R)-3-phosphoglycerate + 2 H(+). Functionally, ruBisCO catalyzes two reactions: the carboxylation of D-ribulose 1,5-bisphosphate, the primary event in carbon dioxide fixation, as well as the oxidative fragmentation of the pentose substrate in the photorespiration process. Both reactions occur simultaneously and in competition at the same active site. This Drosera peltata (Pale sundew) protein is Ribulose bisphosphate carboxylase large chain.